The primary structure comprises 284 residues: 2-dehydro-3-deoxyphosphooctonate aldolase (284 aa).

The protein belongs to the KdsA family.

The protein resides in the cytoplasm. The enzyme catalyses D-arabinose 5-phosphate + phosphoenolpyruvate + H2O = 3-deoxy-alpha-D-manno-2-octulosonate-8-phosphate + phosphate. It participates in carbohydrate biosynthesis; 3-deoxy-D-manno-octulosonate biosynthesis; 3-deoxy-D-manno-octulosonate from D-ribulose 5-phosphate: step 2/3. The protein operates within bacterial outer membrane biogenesis; lipopolysaccharide biosynthesis. This chain is 2-dehydro-3-deoxyphosphooctonate aldolase, found in Pectobacterium carotovorum subsp. carotovorum (strain PC1).